Here is a 102-residue protein sequence, read N- to C-terminus: Small ribosomal subunit protein uS10 (102 aa).

It belongs to the universal ribosomal protein uS10 family. Part of the 30S ribosomal subunit.

Functionally, involved in the binding of tRNA to the ribosomes. The protein is Small ribosomal subunit protein uS10 of Halalkalibacterium halodurans (strain ATCC BAA-125 / DSM 18197 / FERM 7344 / JCM 9153 / C-125) (Bacillus halodurans).